Reading from the N-terminus, the 245-residue chain is Small ribosomal subunit protein uS3 (245 aa).

A KH type-2 domain is found at 39-107; sequence IRKAIREKLK…EVRVNLVEIR (69 aa). Residues 216–245 are disordered; the sequence is DKRLETSGQSRARANTNQRGPASGAQAAGA. Positions 221–235 are enriched in polar residues; the sequence is TSGQSRARANTNQRG.

Belongs to the universal ribosomal protein uS3 family. Part of the 30S ribosomal subunit. Forms a tight complex with proteins S10 and S14.

Binds the lower part of the 30S subunit head. Binds mRNA in the 70S ribosome, positioning it for translation. This Hyphomonas neptunium (strain ATCC 15444) protein is Small ribosomal subunit protein uS3.